The primary structure comprises 135 residues: Large ribosomal subunit protein uL16 (135 aa).

The protein belongs to the universal ribosomal protein uL16 family. In terms of assembly, part of the 50S ribosomal subunit.

In terms of biological role, binds 23S rRNA and is also seen to make contacts with the A and possibly P site tRNAs. The chain is Large ribosomal subunit protein uL16 from Bdellovibrio bacteriovorus (strain ATCC 15356 / DSM 50701 / NCIMB 9529 / HD100).